Here is a 114-residue protein sequence, read N- to C-terminus: Ribosome-binding factor A (114 aa).

Belongs to the RbfA family. As to quaternary structure, monomer. Binds 30S ribosomal subunits, but not 50S ribosomal subunits or 70S ribosomes.

Its subcellular location is the cytoplasm. Functionally, one of several proteins that assist in the late maturation steps of the functional core of the 30S ribosomal subunit. Associates with free 30S ribosomal subunits (but not with 30S subunits that are part of 70S ribosomes or polysomes). Required for efficient processing of 16S rRNA. May interact with the 5'-terminal helix region of 16S rRNA. This Staphylococcus saprophyticus subsp. saprophyticus (strain ATCC 15305 / DSM 20229 / NCIMB 8711 / NCTC 7292 / S-41) protein is Ribosome-binding factor A.